Here is a 129-residue protein sequence, read N- to C-terminus: Translation initiation factor 5A (129 aa).

Residue lysine 36 is modified to Hypusine.

It belongs to the eIF-5A family.

The protein resides in the cytoplasm. In terms of biological role, functions by promoting the formation of the first peptide bond. This Thermoplasma acidophilum (strain ATCC 25905 / DSM 1728 / JCM 9062 / NBRC 15155 / AMRC-C165) protein is Translation initiation factor 5A (eif5a).